Here is a 345-residue protein sequence, read N- to C-terminus: RNA polymerase II holoenzyme cyclin-like subunit (345 aa).

Residues 53 to 144 enclose the Cyclin N-terminal domain; sequence QQINRLGKRM…IGECEFYLIS (92 aa). Residues 256–285 form a disordered region; sequence GLTPQSSSGLQAMLPPQSPAGEGPAEGNKN.

This sequence belongs to the cyclin family. Cyclin C subfamily. Component of the srb8-11 complex, a regulatory module of the Mediator complex.

Its subcellular location is the nucleus. In terms of biological role, component of the srb8-11 complex. The srb8-11 complex is a regulatory module of the Mediator complex which is itself involved in regulation of basal and activated RNA polymerase II-dependent transcription. The srb8-11 complex may be involved in the transcriptional repression of a subset of genes regulated by Mediator. It may inhibit the association of the Mediator complex with RNA polymerase II to form the holoenzyme complex. The srb8-11 complex phosphorylates the C-terminal domain (CTD) of the largest subunit of RNA polymerase II. The sequence is that of RNA polymerase II holoenzyme cyclin-like subunit (ssn8) from Neurospora crassa (strain ATCC 24698 / 74-OR23-1A / CBS 708.71 / DSM 1257 / FGSC 987).